The following is a 286-amino-acid chain: Bifunctional protein FolD (286 aa).

NADP(+) is bound by residues 165–167 (GRS) and serine 190.

Belongs to the tetrahydrofolate dehydrogenase/cyclohydrolase family. In terms of assembly, homodimer.

It catalyses the reaction (6R)-5,10-methylene-5,6,7,8-tetrahydrofolate + NADP(+) = (6R)-5,10-methenyltetrahydrofolate + NADPH. It carries out the reaction (6R)-5,10-methenyltetrahydrofolate + H2O = (6R)-10-formyltetrahydrofolate + H(+). Its pathway is one-carbon metabolism; tetrahydrofolate interconversion. Catalyzes the oxidation of 5,10-methylenetetrahydrofolate to 5,10-methenyltetrahydrofolate and then the hydrolysis of 5,10-methenyltetrahydrofolate to 10-formyltetrahydrofolate. This Staphylococcus aureus (strain bovine RF122 / ET3-1) protein is Bifunctional protein FolD.